We begin with the raw amino-acid sequence, 551 residues long: Cytochrome P450 monooxygenase sdnQ (551 aa).

The interval 1-23 (MDDPSIASGFQQGTGRTTGANGT) is disordered. Residues 8-23 (SGFQQGTGRTTGANGT) are compositionally biased toward polar residues. An N-linked (GlcNAc...) asparagine glycan is attached at Asn-21. Residues 41-57 (CIGTSLLVALLTTIIIY) traverse the membrane as a helical segment. A heme-binding site is contributed by Cys-491.

This sequence belongs to the cytochrome P450 family. Requires heme as cofactor.

It is found in the membrane. It functions in the pathway antibiotic biosynthesis. Cytochrome P450 monooxygenase; part of the gene cluster that mediates the biosynthesis of sordarin and hypoxysordarin, glycoside antibiotics with a unique tetracyclic diterpene aglycone structure. First, the geranylgeranyl diphosphate synthase sdnC constructs GGDP from farnesyl diphosphate and isopentenyl diphosphate. The diterpene cyclase sdnA then catalyzes the cyclization of GGDP to afford cycloaraneosene. Cycloaraneosene is then hydroxylated four times by the putative cytochrome P450 monooxygenases sdnB, sdnE, sdnF and sdnH to give a hydroxylated cycloaraneosene derivative such as cycloaraneosene-8,9,13,19-tetraol. Although the order of the hydroxylations is unclear, at least C8, C9 and C13 of the cycloaraneosene skeleton are hydroxylated before the sordaricin formation. Dehydration of the 13-hydroxy group of the hydroxylated cycloaraneosene derivative might be catalyzed by an unassigned hypothetical protein such as sdnG and sdnP to construct the cyclopentadiene moiety. The FAD-dependent oxidoreductase sdnN is proposed to catalyze the oxidation at C9 of the hydroxylated cycloaraneosene derivative and also catalyze the Baeyer-Villiger oxidation to give the lactone intermediate. The presumed lactone intermediate would be hydrolyzed to give an acrolein moiety and a carboxylate moiety. Then, [4+2]cycloaddition would occur between the acrolein moiety and the cyclopentadiene moiety to give sordaricin. SdnN might also be involved in the [4+2]cycloaddition after the hypothesized oxidation to accommodate the oxidized product and prompt the [4+2]cycloaddition. GDP-6-deoxy-D-altrose may be biosynthesized from GDP-D-mannose by the putative GDP-mannose-4,6-dehydratase sdnI and the short-chain dehydrogenase sdnK. The glycosyltransferase sdnJ catalyzes the attachment of 6-deoxy-D-altrose onto the 19-hydroxy group of sordaricin to give 4'-O-demethylsordarin. The methyltransferase sdnD would complete the biosynthesis of sordarin. Sordarin can be further modified into hypoxysordarin. The unique acyl chain at the 3'-hydroxy group of hypoxysordarin would be constructed by an iterative type I PKS sdnO and the trans-acting polyketide methyltransferase sdnL. SdnL would be responsible for the introduction of an alpha-methyl group of the polyketide chain. Alternatively, the beta-lactamase-like protein sdnR might be responsible for the cleavage and transfer of the polyketide chain from the PKS sdnO to sordarin. Two putative cytochrome P450 monooxygenases, sdnQ and sdnT, might catalyze the epoxidations of the polyketide chain to complete the biosynthesis of hypoxysordarin. Transcriptional regulators sdnM and sdnS are presumably encoded for the transcriptional regulation of the expression of the sdn gene cluster. In Sordaria araneosa (Pleurage araneosa), this protein is Cytochrome P450 monooxygenase sdnQ.